A 68-amino-acid chain; its full sequence is Bacteriocin lactococcin-B (68 aa).

Residues 1–21 (MKNQLNFNIVSDEELAEVNGG) constitute a propeptide that is removed on maturation.

Its subcellular location is the secreted. Kills Lactococci by dissipating the membrane potential of the cells. The protein is Bacteriocin lactococcin-B (lcnB) of Lactococcus lactis subsp. cremoris (Streptococcus cremoris).